Consider the following 354-residue polypeptide: Uroporphyrinogen decarboxylase (354 aa).

Substrate is bound by residues 27 to 31 (RQAGR), D77, Y154, T209, and H327.

The protein belongs to the uroporphyrinogen decarboxylase family. As to quaternary structure, homodimer.

Its subcellular location is the cytoplasm. It catalyses the reaction uroporphyrinogen III + 4 H(+) = coproporphyrinogen III + 4 CO2. It functions in the pathway porphyrin-containing compound metabolism; protoporphyrin-IX biosynthesis; coproporphyrinogen-III from 5-aminolevulinate: step 4/4. Catalyzes the decarboxylation of four acetate groups of uroporphyrinogen-III to yield coproporphyrinogen-III. The chain is Uroporphyrinogen decarboxylase from Pseudomonas putida (strain W619).